We begin with the raw amino-acid sequence, 206 residues long: Transmembrane emp24 domain-containing protein bai (206 aa).

Residues 1 to 17 (MAKATFFYFLFIGYVWP) form the signal peptide. The Lumenal portion of the chain corresponds to 18–172 (IDSVMFNLAP…RDTNEKTNSR (155 aa)). A GOLD domain is found at 30–140 (QKCLKEDIQA…LKPLEVDLKR (111 aa)). Residues 173-193 (VLFFSIFSMCCLLGLATWQVL) form a helical membrane-spanning segment. Topologically, residues 194-206 (YLRRYFKAKKLIE) are cytoplasmic.

It belongs to the EMP24/GP25L family.

It is found in the membrane. In terms of biological role, eca and bai are essential, though not redundant, for dorsoventral patterning of the embryo. Specifically required during early embryogenesis for the activity of maternal tkv, while the zygotic tkv is not affected. This is Transmembrane emp24 domain-containing protein bai from Drosophila persimilis (Fruit fly).